We begin with the raw amino-acid sequence, 312 residues long: Olfactory receptor 7G3 (312 aa).

Over 1 to 25 (MKAGNFSDTPEFFLLGLSGDPELQP) the chain is Extracellular. An N-linked (GlcNAc...) asparagine glycan is attached at asparagine 5. The helical transmembrane segment at 26-46 (ILFMLFLSMYLATMLGNLLII) threads the bilayer. Over 47-54 (LAVNSDSH) the chain is Cytoplasmic. A helical membrane pass occupies residues 55–75 (LHTPMYFLLSILSLVDICFTS). The Extracellular segment spans residues 76 to 99 (TTMPKMLVNIQAQAQSINYTGCLT). An N-linked (GlcNAc...) asparagine glycan is attached at asparagine 93. A disulfide bridge links cysteine 97 with cysteine 189. The chain crosses the membrane as a helical span at residues 100–120 (QICFVLVFVGLENGILVMMAY). At 121–139 (DRFVAICHPLRYNVIMNPK) the chain is on the cytoplasmic side. A helical membrane pass occupies residues 140 to 160 (LCGLLLLLSFIVSVLDALLHT). Over 161-197 (LMVLQLTFCIDLEIPHFFCELAHILKLACSDVLINNI) the chain is Extracellular. The helical transmembrane segment at 198 to 217 (LVYLVTSLLGVVPLSGIIFS) threads the bilayer. Residues 218-237 (YTRIVSSVMKIPSAGGKYKA) lie on the Cytoplasmic side of the membrane. Residues 238–258 (FSICGSHLIVVSLFYGTGFGV) traverse the membrane as a helical segment. Residues 259-271 (YLSSGATHSSRKG) are Extracellular-facing. Residues 272-292 (AIASVMYTVVTPMLNPLIYSL) form a helical membrane-spanning segment. The Cytoplasmic segment spans residues 293-312 (RNKDMLKALRKLISRIPSFH).

The protein belongs to the G-protein coupled receptor 1 family.

It is found in the cell membrane. Functionally, odorant receptor. The protein is Olfactory receptor 7G3 (OR7G3) of Homo sapiens (Human).